The sequence spans 348 residues: Dehydrogenase orsE (348 aa).

43–46 (LDTH) is an NADP(+) binding site. Position 130–137 (130–137 (FAVEAAVC)) interacts with substrate. Residues 180–183 (SSSV), 203–206 (GAHN), and 272–273 (VH) each bind NADP(+). Residue 292-296 (NDIAT) participates in substrate binding. 339–340 (VS) serves as a coordination point for NADP(+).

The protein belongs to the zinc-containing alcohol dehydrogenase family. As to quaternary structure, monomer.

Its function is as follows. Dehydrogenase; part of the gene cluster that mediates the biosynthesis of orsellinic acid, as well as of the cathepsin K inhibitors F9775 A and F9775 B. The non-reducing polyketide synthase orsA produces orsellinic acid by condensing acetyl-CoA with 3 malonyl-CoA units. Further modifications by the decarboxylase orsB and the tyrosinase-like protein orsC lead to the production of F9775 A and F9775 B. The functions of orsD and orsE remain unclear since only orsB and orsC are required to convert orsellinic acid into F9775 A and F9775 B. This chain is Dehydrogenase orsE, found in Emericella nidulans (strain FGSC A4 / ATCC 38163 / CBS 112.46 / NRRL 194 / M139) (Aspergillus nidulans).